Consider the following 157-residue polypeptide: MSRRNRAPKRDILPDPKYKSQVVAKFVNHIMLSGKKSIAEKIVYGAFDKIKAKDASANEVEVFEKALESVSPMVEVKSRRVGGATYQVPVEVRPERRQTLGMRWIIDAARKRKENTMGDRVAAEILEAVEGRGAAVKKREDTHKMAEANKAFAHFRW.

Belongs to the universal ribosomal protein uS7 family. Part of the 30S ribosomal subunit. Contacts proteins S9 and S11.

One of the primary rRNA binding proteins, it binds directly to 16S rRNA where it nucleates assembly of the head domain of the 30S subunit. Is located at the subunit interface close to the decoding center, probably blocks exit of the E-site tRNA. In Francisella tularensis subsp. tularensis (strain FSC 198), this protein is Small ribosomal subunit protein uS7.